A 107-amino-acid polypeptide reads, in one-letter code: MAIMKKTSKLTQTAMLKQILKRCSSLGKKNGGGYDEDCLPLDVPKGHFPVYVGENRSRYIVPISFLTHPEFQSLLQRAEEEFGFDHDMGLTIPCDELVFQTLTSMIR.

It belongs to the ARG7 family. In terms of assembly, interacts with BZR1. In terms of tissue distribution, expressed in cotyledons, leaves, flowers and siliques.

The protein resides in the cell membrane. Functionally, provide a mechanistic link between auxin and plasma membrane H(+)-ATPases (PM H(+)-ATPases, e.g. AHA1 and AHA2), and triggers PM H(+)-ATPases activity by promoting phosphorylation of their C-terminal autoinhibitory domain as a result of PP2C-D subfamily of type 2C phosphatases inhibition, thus leading to the acidification of the apoplast and the facilitation of solutes and water uptake to drive cell expansion. Triggers plant growth probably by promoting cell elongation. Regulates branch angles and bending. Effector of hormonal and environmental signals in plant growth. The sequence is that of Auxin-responsive protein SAUR50 from Arabidopsis thaliana (Mouse-ear cress).